The following is a 264-amino-acid chain: ATP synthase subunit a (264 aa).

5 helical membrane passes run 39–59 (LDTL…FYIV), 97–117 (VAPL…MDLV), 139–159 (TADP…VIFY), 205–225 (LFGN…LPWW), and 239–259 (LLVI…YISL).

The protein belongs to the ATPase A chain family. As to quaternary structure, F-type ATPases have 2 components, CF(1) - the catalytic core - and CF(0) - the membrane proton channel. CF(1) has five subunits: alpha(3), beta(3), gamma(1), delta(1), epsilon(1). CF(0) has three main subunits: a(1), b(2) and c(9-12). The alpha and beta chains form an alternating ring which encloses part of the gamma chain. CF(1) is attached to CF(0) by a central stalk formed by the gamma and epsilon chains, while a peripheral stalk is formed by the delta and b chains.

Its subcellular location is the cell inner membrane. Its function is as follows. Key component of the proton channel; it plays a direct role in the translocation of protons across the membrane. This Coxiella burnetii (strain Dugway 5J108-111) protein is ATP synthase subunit a.